The sequence spans 97 residues: Co-chaperonin GroES (97 aa).

This sequence belongs to the GroES chaperonin family. In terms of assembly, heptamer of 7 subunits arranged in a ring. Interacts with the chaperonin GroEL.

It is found in the cytoplasm. Functionally, together with the chaperonin GroEL, plays an essential role in assisting protein folding. The GroEL-GroES system forms a nano-cage that allows encapsulation of the non-native substrate proteins and provides a physical environment optimized to promote and accelerate protein folding. GroES binds to the apical surface of the GroEL ring, thereby capping the opening of the GroEL channel. The chain is Co-chaperonin GroES from Buchnera aphidicola subsp. Pterocomma populeum.